The following is a 450-amino-acid chain: LanC-like protein 2 (450 aa).

Gly2 carries N-myristoyl glycine lipidation. Residues 2–15 are interaction with inositol phospholipids; that stretch reads GETMSKRLKLHLGG. At Tyr198 the chain carries Phosphotyrosine.

It belongs to the LanC-like protein family. Interacts with an array of inositol phospholipids such as phosphatidylinositol 3-phosphate (PI3P), phosphatidylinositol 4-phosphate (PI4P) and phosphatidylinositol 5-phosphate (PI5P). PIP-binding enhances membrane association. In terms of processing, myristoylated. Essential for membrane association. Expressed in brain and testis.

The protein localises to the nucleus. The protein resides in the cytoplasm. It localises to the cell membrane. Its function is as follows. Necessary for abscisic acid (ABA) binding on the cell membrane and activation of the ABA signaling pathway in granulocytes. The chain is LanC-like protein 2 (LANCL2) from Homo sapiens (Human).